The chain runs to 377 residues: Alanine racemase (377 aa).

Lys-37 functions as the Proton acceptor; specific for D-alanine in the catalytic mechanism. At Lys-37 the chain carries N6-(pyridoxal phosphate)lysine. Arg-135 serves as a coordination point for substrate. Tyr-271 functions as the Proton acceptor; specific for L-alanine in the catalytic mechanism. Residue Met-319 coordinates substrate.

Belongs to the alanine racemase family. The cofactor is pyridoxal 5'-phosphate.

The catalysed reaction is L-alanine = D-alanine. It participates in amino-acid biosynthesis; D-alanine biosynthesis; D-alanine from L-alanine: step 1/1. In terms of biological role, catalyzes the interconversion of L-alanine and D-alanine. May also act on other amino acids. This Helicobacter pylori (strain J99 / ATCC 700824) (Campylobacter pylori J99) protein is Alanine racemase (alr).